Here is a 190-residue protein sequence, read N- to C-terminus: Cysteine dioxygenase (190 aa).

3 residues coordinate Fe cation: H78, H80, and H132. Positions C85–Y149 form a cross-link, 3'-(S-cysteinyl)-tyrosine (Cys-Tyr).

The protein belongs to the cysteine dioxygenase family. Requires Fe cation as cofactor. The thioether cross-link between Cys-85 and Tyr-149 plays a structural role through stabilizing the Fe(2+) ion, and prevents the production of highly damaging free hydroxyl radicals by holding the oxygen radical via hydroxyl hydrogen.

It carries out the reaction L-cysteine + O2 = 3-sulfino-L-alanine + H(+). It functions in the pathway organosulfur biosynthesis; taurine biosynthesis; hypotaurine from L-cysteine: step 1/2. This Caenorhabditis briggsae protein is Cysteine dioxygenase (cdo-1).